The sequence spans 101 residues: ATP-dependent Clp protease adapter protein ClpS 2 (101 aa).

The protein belongs to the ClpS family. Binds to the N-terminal domain of the chaperone ClpA.

In terms of biological role, involved in the modulation of the specificity of the ClpAP-mediated ATP-dependent protein degradation. This Mesorhizobium japonicum (strain LMG 29417 / CECT 9101 / MAFF 303099) (Mesorhizobium loti (strain MAFF 303099)) protein is ATP-dependent Clp protease adapter protein ClpS 2.